Here is a 580-residue protein sequence, read N- to C-terminus: uncharacterized protein (580 aa).

This is an uncharacterized protein from Methanocaldococcus jannaschii (strain ATCC 43067 / DSM 2661 / JAL-1 / JCM 10045 / NBRC 100440) (Methanococcus jannaschii).